The chain runs to 244 residues: Ferredoxin--NADP reductase B (244 aa).

Positions 4–106 (AEPFEARLVA…VGPHGLFTRD (103 aa)) constitute an FAD-binding FR-type domain. FAD contacts are provided by residues 55 to 58 (RAYS) and Thr-120.

This sequence belongs to the ferredoxin--NADP reductase type 1 family. Requires FAD as cofactor.

It catalyses the reaction 2 reduced [4Fe-4S]-[ferredoxin] + NADP(+) + H(+) = 2 oxidized [4Fe-4S]-[ferredoxin] + NADPH. In terms of biological role, transports electrons between NADPH and ferredoxin. Can transfer electrons to ferredoxins Fdx2 and Fdx8. Prefers NADPH to NADH. In Sorangium cellulosum (strain So ce56) (Polyangium cellulosum (strain So ce56)), this protein is Ferredoxin--NADP reductase B.